We begin with the raw amino-acid sequence, 161 residues long: 3-hydroxyacyl-[acyl-carrier-protein] dehydratase FabZ (161 aa).

The active site involves His66.

It belongs to the thioester dehydratase family. FabZ subfamily.

The protein localises to the cytoplasm. It catalyses the reaction a (3R)-hydroxyacyl-[ACP] = a (2E)-enoyl-[ACP] + H2O. Involved in unsaturated fatty acids biosynthesis. Catalyzes the dehydration of short chain beta-hydroxyacyl-ACPs and long chain saturated and unsaturated beta-hydroxyacyl-ACPs. The polypeptide is 3-hydroxyacyl-[acyl-carrier-protein] dehydratase FabZ (Gluconacetobacter diazotrophicus (strain ATCC 49037 / DSM 5601 / CCUG 37298 / CIP 103539 / LMG 7603 / PAl5)).